The following is a 221-amino-acid chain: NADH-ubiquinone oxidoreductase chain 4 (221 aa).

The next 5 helical transmembrane spans lie at 20–40 (ALIA…LLTM), 45–65 (LTGS…LFCL), 78–98 (LLIN…WFLL), 121–141 (IVSW…FSAA), and 170–190 (FLLL…SNFC).

Belongs to the complex I subunit 4 family.

It is found in the mitochondrion membrane. The enzyme catalyses a ubiquinone + NADH + 5 H(+)(in) = a ubiquinol + NAD(+) + 4 H(+)(out). Core subunit of the mitochondrial membrane respiratory chain NADH dehydrogenase (Complex I) that is believed to belong to the minimal assembly required for catalysis. Complex I functions in the transfer of electrons from NADH to the respiratory chain. The immediate electron acceptor for the enzyme is believed to be ubiquinone. The protein is NADH-ubiquinone oxidoreductase chain 4 (ND4) of Anopheles arabiensis (Mosquito).